A 287-amino-acid polypeptide reads, in one-letter code: MQVQKSFKDKKTSGTLYLVPTPIGNLQDMTFRAVATLKEVDFICAEDTRNTGLLLKHFDIATKQISFHEHNAYEKIPDLIDLLISGRSLAQVSDAGMPSISDPGHDLVKAAIDSDIAVVALPGASAGITALIASGLAPQPHVFYGFLPRKAGQQKAFFEDKHHYPETQMFYESPYRIKDTLTNMLACYGDRQVVLVRELTKLFEEYQRGSISEILSYLEETPLKGECLLIVAGAQADSEVELTADVDLVSLVQKEIQAGAKPNQAIKTIAKAYQVNRQELYQQFHDL.

It belongs to the methyltransferase superfamily. RsmI family.

Its subcellular location is the cytoplasm. The catalysed reaction is cytidine(1402) in 16S rRNA + S-adenosyl-L-methionine = 2'-O-methylcytidine(1402) in 16S rRNA + S-adenosyl-L-homocysteine + H(+). Its function is as follows. Catalyzes the 2'-O-methylation of the ribose of cytidine 1402 (C1402) in 16S rRNA. The sequence is that of Ribosomal RNA small subunit methyltransferase I from Streptococcus pyogenes serotype M1.